We begin with the raw amino-acid sequence, 66 residues long: Xenoxin-3 (66 aa).

Disulfide bonds link C3–C24, C17–C37, C43–C58, and C59–C64.

In terms of tissue distribution, expressed by the skin dorsal glands.

It is found in the secreted. Lacks alpha-neurotoxic activity, has apparently no antibacterial activity, nor anti-coagulant potency. In Xenopus laevis (African clawed frog), this protein is Xenoxin-3.